The following is a 163-amino-acid chain: 2-C-methyl-D-erythritol 2,4-cyclodiphosphate synthase (163 aa).

A divalent metal cation contacts are provided by Asp-11 and His-13. 4-CDP-2-C-methyl-D-erythritol 2-phosphate-binding positions include 11–13 and 37–38; these read DIH and HS. Residue His-45 participates in a divalent metal cation binding. 4-CDP-2-C-methyl-D-erythritol 2-phosphate-binding positions include 59 to 61, 64 to 68, 103 to 109, and Arg-145; these read DIG, FSDTD, and AQVPKMA.

The protein belongs to the IspF family. In terms of assembly, homotrimer. A divalent metal cation serves as cofactor.

It catalyses the reaction 4-CDP-2-C-methyl-D-erythritol 2-phosphate = 2-C-methyl-D-erythritol 2,4-cyclic diphosphate + CMP. It participates in isoprenoid biosynthesis; isopentenyl diphosphate biosynthesis via DXP pathway; isopentenyl diphosphate from 1-deoxy-D-xylulose 5-phosphate: step 4/6. Its function is as follows. Involved in the biosynthesis of isopentenyl diphosphate (IPP) and dimethylallyl diphosphate (DMAPP), two major building blocks of isoprenoid compounds. Catalyzes the conversion of 4-diphosphocytidyl-2-C-methyl-D-erythritol 2-phosphate (CDP-ME2P) to 2-C-methyl-D-erythritol 2,4-cyclodiphosphate (ME-CPP) with a corresponding release of cytidine 5-monophosphate (CMP). This chain is 2-C-methyl-D-erythritol 2,4-cyclodiphosphate synthase, found in Nitrosomonas europaea (strain ATCC 19718 / CIP 103999 / KCTC 2705 / NBRC 14298).